A 212-amino-acid polypeptide reads, in one-letter code: Deoxyribose-phosphate aldolase (212 aa).

Catalysis depends on Asp89, which acts as the Proton donor/acceptor. Lys151 acts as the Schiff-base intermediate with acetaldehyde in catalysis. Lys180 serves as the catalytic Proton donor/acceptor.

Belongs to the DeoC/FbaB aldolase family. DeoC type 1 subfamily.

It localises to the cytoplasm. The enzyme catalyses 2-deoxy-D-ribose 5-phosphate = D-glyceraldehyde 3-phosphate + acetaldehyde. It functions in the pathway carbohydrate degradation; 2-deoxy-D-ribose 1-phosphate degradation; D-glyceraldehyde 3-phosphate and acetaldehyde from 2-deoxy-alpha-D-ribose 1-phosphate: step 2/2. Its function is as follows. Catalyzes a reversible aldol reaction between acetaldehyde and D-glyceraldehyde 3-phosphate to generate 2-deoxy-D-ribose 5-phosphate. In Clostridium botulinum (strain Okra / Type B1), this protein is Deoxyribose-phosphate aldolase.